The following is a 157-amino-acid chain: 2-C-methyl-D-erythritol 2,4-cyclodiphosphate synthase (157 aa).

A divalent metal cation contacts are provided by Asp8 and His10. Residues 8 to 10 and 34 to 35 each bind 4-CDP-2-C-methyl-D-erythritol 2-phosphate; these read DVH and HS. His42 contributes to the a divalent metal cation binding site. Residues 56-58, 61-65, 100-106, 132-135, Phe139, and Arg142 contribute to the 4-CDP-2-C-methyl-D-erythritol 2-phosphate site; these read DIG, FPDTD, AQAPKMA, and TTTE.

The protein belongs to the IspF family. Homotrimer. The cofactor is a divalent metal cation.

The catalysed reaction is 4-CDP-2-C-methyl-D-erythritol 2-phosphate = 2-C-methyl-D-erythritol 2,4-cyclic diphosphate + CMP. It functions in the pathway isoprenoid biosynthesis; isopentenyl diphosphate biosynthesis via DXP pathway; isopentenyl diphosphate from 1-deoxy-D-xylulose 5-phosphate: step 4/6. In terms of biological role, involved in the biosynthesis of isopentenyl diphosphate (IPP) and dimethylallyl diphosphate (DMAPP), two major building blocks of isoprenoid compounds. Catalyzes the conversion of 4-diphosphocytidyl-2-C-methyl-D-erythritol 2-phosphate (CDP-ME2P) to 2-C-methyl-D-erythritol 2,4-cyclodiphosphate (ME-CPP) with a corresponding release of cytidine 5-monophosphate (CMP). The protein is 2-C-methyl-D-erythritol 2,4-cyclodiphosphate synthase of Stutzerimonas stutzeri (strain A1501) (Pseudomonas stutzeri).